Here is an 82-residue protein sequence, read N- to C-terminus: MKLTCMMIVAVLFLTAWTLVMADDSNNGLANHFSKSRDEMEDPEASKLEKRACRKKWEYCIVPIIGFIYCCPGLICGPFVCV.

A signal peptide spans 1–22; the sequence is MKLTCMMIVAVLFLTAWTLVMA. Residues 23 to 49 constitute a propeptide that is removed on maturation; that stretch reads DDSNNGLANHFSKSRDEMEDPEASKLE. Disulfide bonds link Cys-53-Cys-71, Cys-60-Cys-76, and Cys-70-Cys-81.

As to expression, expressed by the venom duct.

Its subcellular location is the secreted. Functionally, muO-conotoxins are gating-modifier toxins that inhibit sodium current by trapping the domain II voltage sensor in the closed position to prevent opening of the sodium channel. This toxin inhibits rNav1.2/SCN2A (IC(50)=532 nM), rNav1.4/SCN4A (IC(50)=438 nM) and rNav1.7/SCN9A (IC(50)=345 nM). It blocks Nav channels by interacting mainly with the C-terminal part of the pore loop of domain-3. It does not bind on site 1. At small concentration, this toxin also acts as a calcium current agonist, whereas at higher doses it blocks fast-inactivating calcium current. The polypeptide is Mu-conotoxin MrVIA (Conus marmoreus (Marble cone)).